Consider the following 234-residue polypeptide: Probable transcriptional regulatory protein Pfl01_3677 (234 aa).

This sequence belongs to the TACO1 family.

The protein resides in the cytoplasm. In Pseudomonas fluorescens (strain Pf0-1), this protein is Probable transcriptional regulatory protein Pfl01_3677.